The following is a 106-amino-acid chain: CRISPR-associated endoribonuclease Cas2 (106 aa).

Aspartate 22 is a Mg(2+) binding site.

This sequence belongs to the CRISPR-associated endoribonuclease Cas2 protein family. In terms of assembly, homodimer, forms a heterotetramer with a Cas1 homodimer. Mg(2+) is required as a cofactor.

Functionally, CRISPR (clustered regularly interspaced short palindromic repeat), is an adaptive immune system that provides protection against mobile genetic elements (viruses, transposable elements and conjugative plasmids). CRISPR clusters contain sequences complementary to antecedent mobile elements and target invading nucleic acids. CRISPR clusters are transcribed and processed into CRISPR RNA (crRNA). Functions as a ssRNA-specific endoribonuclease. Involved in the integration of spacer DNA into the CRISPR cassette. The chain is CRISPR-associated endoribonuclease Cas2 from Fusobacterium nucleatum subsp. nucleatum (strain ATCC 25586 / DSM 15643 / BCRC 10681 / CIP 101130 / JCM 8532 / KCTC 2640 / LMG 13131 / VPI 4355).